The following is a 223-amino-acid chain: Sigma non-opioid intracellular receptor 1 (223 aa).

Residues M1–W9 are Lumenal-facing. The segment at C2–R8 is targeting to endoplasmic reticulum-associated lipid droplets. A helical transmembrane segment spans residues A10–L30. Residues G31–A223 lie on the Cytoplasmic side of the membrane. The segment at S99–L106 is important for ligand-binding. The C-terminal hydrophobic region stretch occupies residues V177 to A223.

This sequence belongs to the ERG2 family. Homotrimer. Forms a ternary complex with ANK2 and ITPR3. The complex is disrupted by agonists. Interacts with KCNA4. Interacts with KCNA2; cocaine consumption leads to increased interaction. Interacts with RNF112 in an oxidative stress-regulated manner.

The protein localises to the nucleus inner membrane. The protein resides in the nucleus outer membrane. It localises to the nucleus envelope. It is found in the cytoplasmic vesicle. Its subcellular location is the endoplasmic reticulum membrane. The protein localises to the membrane. The protein resides in the lipid droplet. It localises to the cell junction. It is found in the cell membrane. Its subcellular location is the cell projection. The protein localises to the growth cone. The protein resides in the postsynaptic density membrane. Functionally, functions in lipid transport from the endoplasmic reticulum and is involved in a wide array of cellular functions probably through regulation of the biogenesis of lipid microdomains at the plasma membrane. Involved in the regulation of different receptors it plays a role in BDNF signaling and EGF signaling. Also regulates ion channels like the potassium channel and could modulate neurotransmitter release. Plays a role in calcium signaling through modulation together with ANK2 of the ITP3R-dependent calcium efflux at the endoplasmic reticulum. Plays a role in several other cell functions including proliferation, survival and death. Originally identified for its ability to bind various psychoactive drugs it is involved in learning processes, memory and mood alteration. Necessary for proper mitochondrial axonal transport in motor neurons, in particular the retrograde movement of mitochondria. Plays a role in protecting cells against oxidative stress-induced cell death via its interaction with RNF112. The protein is Sigma non-opioid intracellular receptor 1 (SIGMAR1) of Bos taurus (Bovine).